A 445-amino-acid chain; its full sequence is MDIRQVTETIAMIEEQNFDIRTITMGISLLDCIDPDINRAAEKIYQKITTKAANLVAVGDEIAAELGIPIVNKRVSVTPISLIGAATDATDYVVLAKALDKAAKEIGVDFIGGFSALVQKGYQKGDEILINSIPRALAETDKVCSSVNIGSTKSGINMTAVADMGRIIKETANLSDMGVAKLVVFANAVEDNPFMAGAFHGVGEADVIINVGVSGPGVVKRALEKVRGQSFDVVAETVKKTAFKITRIGQLVGQMASERLGVEFGIVDLSLAPTPAVGDSVARVLEEMGLETVGTHGTTAALALLNDQVKKGGVMACNQVGGLSGAFIPVSEDEGMIAAVQNGSLNLEKLEAMTAICSVGLDMIAIPEDTPAETIAAMIADEAAIGVINMKTTAVRIIPKGKEGDMIEFGGLLGTAPVMRVNGASSVDFISRGGQIPAPIHSFKN.

Belongs to the UPF0210 family. As to quaternary structure, homodimer.

The sequence is that of UPF0210 protein SPG_0223 from Streptococcus pneumoniae serotype 19F (strain G54).